A 264-amino-acid chain; its full sequence is General transcription factor IIF subunit 2 (264 aa).

This sequence belongs to the TFIIF beta subunit family. Heterodimer of an alpha and a beta subunit.

It localises to the nucleus. Functionally, TFIIF is a general transcription initiation factor that binds to RNA polymerase II and helps to recruit it to the initiation complex in collaboration with TFIIB. This chain is General transcription factor IIF subunit 2 (gtf2f2), found in Xenopus laevis (African clawed frog).